Here is a 497-residue protein sequence, read N- to C-terminus: E3 ubiquitin-protein ligase CBL-C (497 aa).

The tract at residues 7–145 (PQGWQWGEPR…SALFPEGKYC (139 aa)) is 4H. The Cbl-PTB domain maps to 7-321 (PQGWQWGEPR…GKNHNPDLTE (315 aa)). The tract at residues 146–218 (GHLYQITKGS…FEFDIFTRLF (73 aa)) is EF-hand-like. Ca(2+) is bound by residues D199, T201, and E210. An SH2-like region spans residues 219–321 (QPWPTLLKNW…GKNHNPDLTE (103 aa)). R264 is a binding site for 4-O-phospho-L-tyrosine. Residues 322-350 (LCRAVLNQCIQVSQEQLQLYQAMNSTFEL) form a linker region. Y341 carries the post-translational modification Phosphotyrosine; by SRC. The RING-type zinc finger occupies 351–390 (CKICTERDKDVRIEPCGHLLCSCCLAAWQHSDSQTCPFCR). An interaction with RET region spans residues 351 to 497 (CKICTERDKD…QVREGATESS (147 aa)).

In terms of assembly, interacts with Ubiquitin-conjugating enzyme E2 UBE2D2 and UBE2D3. Interacts with EGFR (tyrosine phosphorylated). Interacts with the SH3 domain proteins LYN and CRK. Interacts (via RING-type zinc finger) with TGFB1I1 (via LIM zinc-binding domain 2); the interaction is direct and enhances the E3 activity. Interacts directly with RET (inactive) and CD2AP; dissociates from RET upon RET activation by GDNF which also increases the interaction with CD2AP suggesting dissociation as CBLC:CD2AP complex. Interacts with SRC; the interaction is enhanced when SRC is phosphorylated at 'Tyr-419'. Post-translationally, phosphorylated on multiple tyrosine residues by SRC. In terms of processing, autoubiquitinated, when phosphorylated at Tyr-341.

It carries out the reaction S-ubiquitinyl-[E2 ubiquitin-conjugating enzyme]-L-cysteine + [acceptor protein]-L-lysine = [E2 ubiquitin-conjugating enzyme]-L-cysteine + N(6)-ubiquitinyl-[acceptor protein]-L-lysine.. Phosphorylation at Tyr-341 is necessary and sufficient for the activation of E3 activity. Its function is as follows. Acts as an E3 ubiquitin-protein ligase, which accepts ubiquitin from specific E2 ubiquitin-conjugating enzymes, and then transfers it to substrates promoting their degradation by the proteasome. Functionally coupled with the E2 ubiquitin-protein ligases UB2D1, UB2D2 and UB2D3. Regulator of EGFR mediated signal transduction; upon EGF activation, ubiquitinates EGFR. Inhibits EGF stimulated MAPK1 activation. Promotes ubiquitination of SRC phosphorylated at 'Tyr-419', has the highest ubiquitin ligase activity among CBL family proteins. In collaboration with CD2AP may act as regulatory checkpoint for Ret signaling by modulating the rate of RET degradation after ligand activation; CD2AP converts it from an inhibitor to a promoter of RET degradation; the function limits the potency of GDNF on neuronal survival. The chain is E3 ubiquitin-protein ligase CBL-C (Cblc) from Rattus norvegicus (Rat).